The sequence spans 226 residues: Ribonuclease 3 (226 aa).

Residues 6-128 form the RNase III domain; it reads INRLQRKLGY…LIGGIFLDSD (123 aa). Mg(2+) is bound at residue E41. Residue D45 is part of the active site. Residues D114 and E117 each coordinate Mg(2+). The active site involves E117. Residues 155–225 form the DRBM domain; it reads DPKTRLQEYL…AEQALKQLEL (71 aa).

It belongs to the ribonuclease III family. Homodimer. Mg(2+) is required as a cofactor.

It localises to the cytoplasm. It catalyses the reaction Endonucleolytic cleavage to 5'-phosphomonoester.. Its function is as follows. Digests double-stranded RNA. Involved in the processing of primary rRNA transcript to yield the immediate precursors to the large and small rRNAs (23S and 16S). Processes some mRNAs, and tRNAs when they are encoded in the rRNA operon. Processes pre-crRNA and tracrRNA of type II CRISPR loci if present in the organism. The chain is Ribonuclease 3 from Yersinia enterocolitica serotype O:8 / biotype 1B (strain NCTC 13174 / 8081).